The primary structure comprises 131 residues: DNA-directed RNA polymerases I, II, and III subunit RPABC2 (131 aa).

Positions 1–24 (MDDADYDNDDVGGDDFDDVDEDVD) are disordered.

This sequence belongs to the archaeal Rpo6/eukaryotic RPB6 RNA polymerase subunit family. Component of the RNA polymerase I (Pol I), RNA polymerase II (Pol II) and RNA polymerase III (Pol III) complexes consisting of at least 13, 12 and 17 subunits, respectively.

It localises to the nucleus. In terms of biological role, DNA-dependent RNA polymerases catalyze the transcription of DNA into RNA using the four ribonucleoside triphosphates as substrates. Common component of RNA polymerases I, II and III which synthesize ribosomal RNA precursors, mRNA precursors and many functional non-coding RNAs, and small RNAs, such as 5S rRNA and tRNAs, respectively. Pol II is the central component of the basal RNA polymerase II transcription machinery. Pols are composed of mobile elements that move relative to each other. In Pol II, Polr2F/RPB6 is part of the clamp element and together with parts of Polr2A/RPB1 and RPB2 forms a pocket to which the Polr2D/RPB4-Polr2G/RPB7 subcomplex binds. This chain is DNA-directed RNA polymerases I, II, and III subunit RPABC2, found in Drosophila melanogaster (Fruit fly).